The chain runs to 241 residues: 1-(5-phosphoribosyl)-5-[(5-phosphoribosylamino)methylideneamino] imidazole-4-carboxamide isomerase (241 aa).

Residue Asp-8 is the Proton acceptor of the active site. Asp-129 acts as the Proton donor in catalysis.

This sequence belongs to the HisA/HisF family.

Its subcellular location is the cytoplasm. It carries out the reaction 1-(5-phospho-beta-D-ribosyl)-5-[(5-phospho-beta-D-ribosylamino)methylideneamino]imidazole-4-carboxamide = 5-[(5-phospho-1-deoxy-D-ribulos-1-ylimino)methylamino]-1-(5-phospho-beta-D-ribosyl)imidazole-4-carboxamide. It functions in the pathway amino-acid biosynthesis; L-histidine biosynthesis; L-histidine from 5-phospho-alpha-D-ribose 1-diphosphate: step 4/9. In Rhodospirillum rubrum (strain ATCC 11170 / ATH 1.1.1 / DSM 467 / LMG 4362 / NCIMB 8255 / S1), this protein is 1-(5-phosphoribosyl)-5-[(5-phosphoribosylamino)methylideneamino] imidazole-4-carboxamide isomerase.